The sequence spans 139 residues: Large ribosomal subunit protein bL21 (139 aa).

Belongs to the bacterial ribosomal protein bL21 family. As to quaternary structure, part of the 50S ribosomal subunit. Contacts protein L20.

In terms of biological role, this protein binds to 23S rRNA in the presence of protein L20. This is Large ribosomal subunit protein bL21 from Prochlorococcus marinus (strain NATL1A).